Consider the following 366-residue polypeptide: Alanine racemase (366 aa).

Catalysis depends on Lys33, which acts as the Proton acceptor; specific for D-alanine. Lys33 carries the N6-(pyridoxal phosphate)lysine modification. Position 129 (Arg129) interacts with substrate. Tyr253 functions as the Proton acceptor; specific for L-alanine in the catalytic mechanism. Residue Met301 coordinates substrate.

This sequence belongs to the alanine racemase family. Pyridoxal 5'-phosphate serves as cofactor.

The catalysed reaction is L-alanine = D-alanine. It functions in the pathway amino-acid biosynthesis; D-alanine biosynthesis; D-alanine from L-alanine: step 1/1. Functionally, catalyzes the interconversion of L-alanine and D-alanine. May also act on other amino acids. This is Alanine racemase (alr) from Xanthomonas oryzae pv. oryzae (strain MAFF 311018).